Consider the following 340-residue polypeptide: MRPILLSGHERSLNQIKFNRDGDLLFSVAKDKIVCAWWSANGERLGTYSGHQGAIWTVDVSPNTVLLATGSADNTVRLWNVKTGECVKVWDFPTAVKRVAFNPDGSRLLAVTEKRMGFLGTIAVLDINYGDSQGGGLENQADEPSLRITCTESKATVAGWSYLGKYIIAGHEDGSVSQYDGKTGEQLENVQAHEFDHQINDIQFSQDRTYFITASKDKSAKLISSRNLAILKTYVADTPLNSATITPKKDYVILGGGQAAMDVTTTSARQGKFEARFYHKVFEDEIGRVRGHFGPLNTVDVHPNGTAYASGGEDGYVRVHHFDKPYFDFMYEVEREQLRK.

WD repeat units follow at residues 8 to 47, 50 to 91, 150 to 189, 194 to 233, and 291 to 330; these read GHER…RLGT, GHQG…KVWD, CTES…QLEN, EFDH…ILKT, and GHFG…FDFM.

Belongs to the eIF-3 subunit I family. In terms of assembly, component of the eukaryotic translation initiation factor 3 (eIF-3) complex.

The protein localises to the cytoplasm. Its function is as follows. Component of the eukaryotic translation initiation factor 3 (eIF-3) complex, which is involved in protein synthesis of a specialized repertoire of mRNAs and, together with other initiation factors, stimulates binding of mRNA and methionyl-tRNAi to the 40S ribosome. The eIF-3 complex specifically targets and initiates translation of a subset of mRNAs involved in cell proliferation. This is Eukaryotic translation initiation factor 3 subunit I (tif34) from Aspergillus fumigatus (strain CBS 144.89 / FGSC A1163 / CEA10) (Neosartorya fumigata).